The primary structure comprises 571 residues: Kinesin light chain (571 aa).

Positions 54–160 (LLTSMKTIRK…KKHLEFMNEM (107 aa)) form a coiled coil. A compositionally biased stretch (basic and acidic residues) spans 167–177 (EAQVNEEKESE). Residues 167–210 (EAQVNEEKESEQSSLDLGFPDDDDDGGQPEVLSPTQPSAMAQAA) form a disordered region. TPR repeat units follow at residues 220 to 253 (LRTL…LEKT), 262 to 295 (ATML…REKT), 304 to 337 (AATL…REKV), 346 to 379 (AKQL…YQKE), 388 to 421 (AKTK…AHEK), and 471 to 504 (TTTL…RKSA). Positions 518–571 (GSDFSKGQSPKDRKRSNSRDRNRRDSMDSVSYEKSGDGDEHEKSKLHVGTSHKQ) are disordered. Basic and acidic residues-rich tracts occupy residues 526-544 (SPKD…RDSM) and 551-562 (KSGDGDEHEKSK).

Belongs to the kinesin light chain family. In terms of assembly, oligomeric complex composed of two heavy chains and two light chains.

It is found in the cytoplasm. Its subcellular location is the cytoskeleton. In terms of biological role, kinesin is a microtubule-associated force-producing protein that may play a role in organelle transport. The light chain may function in coupling of cargo to the heavy chain or in the modulation of its ATPase activity. The polypeptide is Kinesin light chain (Doryteuthis pealeii (Longfin inshore squid)).